A 98-amino-acid polypeptide reads, in one-letter code: Gene 4 protein (98 aa).

One can recognise an HNH domain in the interval 41 to 73 (RAATDVDHKKPGNDHSRSNLQAICRVCHGKKSA). A disordered region spans residues 75–98 (EGVARRRELKARRKRPEQRHPGRR). A compositionally biased stretch (basic residues) spans 81-98 (RELKARRKRPEQRHPGRR).

This is Gene 4 protein (4) from Mycobacterium (Mycobacteriophage D29).